The primary structure comprises 474 residues: Synaptotagmin-17 (474 aa).

The tract at residues Trp-60–Pro-117 is disordered. Positions Ser-96–Pro-117 are enriched in low complexity. 2 positions are modified to phosphoserine: Ser-118 and Ser-119. 2 C2 domains span residues Gln-184–Lys-310 and Glu-321–His-455.

It belongs to the synaptotagmin family. Expressed in brain and kidney.

Its subcellular location is the membrane. Functionally, plays a role in dendrite formation by melanocytes. In Rattus norvegicus (Rat), this protein is Synaptotagmin-17 (Syt17).